The sequence spans 445 residues: Phosphoglucosamine mutase (445 aa).

The Phosphoserine intermediate role is filled by S102. S102, D241, D243, and D245 together coordinate Mg(2+). S102 is modified (phosphoserine).

The protein belongs to the phosphohexose mutase family. Mg(2+) is required as a cofactor. In terms of processing, activated by phosphorylation.

The enzyme catalyses alpha-D-glucosamine 1-phosphate = D-glucosamine 6-phosphate. Its function is as follows. Catalyzes the conversion of glucosamine-6-phosphate to glucosamine-1-phosphate. The chain is Phosphoglucosamine mutase from Serratia proteamaculans (strain 568).